Reading from the N-terminus, the 483-residue chain is Aspartyl/glutamyl-tRNA(Asn/Gln) amidotransferase subunit B (483 aa).

The protein belongs to the GatB/GatE family. GatB subfamily. As to quaternary structure, heterotrimer of A, B and C subunits.

It catalyses the reaction L-glutamyl-tRNA(Gln) + L-glutamine + ATP + H2O = L-glutaminyl-tRNA(Gln) + L-glutamate + ADP + phosphate + H(+). The catalysed reaction is L-aspartyl-tRNA(Asn) + L-glutamine + ATP + H2O = L-asparaginyl-tRNA(Asn) + L-glutamate + ADP + phosphate + 2 H(+). Its function is as follows. Allows the formation of correctly charged Asn-tRNA(Asn) or Gln-tRNA(Gln) through the transamidation of misacylated Asp-tRNA(Asn) or Glu-tRNA(Gln) in organisms which lack either or both of asparaginyl-tRNA or glutaminyl-tRNA synthetases. The reaction takes place in the presence of glutamine and ATP through an activated phospho-Asp-tRNA(Asn) or phospho-Glu-tRNA(Gln). In Rickettsia canadensis (strain McKiel), this protein is Aspartyl/glutamyl-tRNA(Asn/Gln) amidotransferase subunit B.